Consider the following 396-residue polypeptide: Metallophosphoesterase 1 (396 aa).

A helical membrane pass occupies residues 27–47 (IAVVFAVLLFCEFLIYYLAIF). Residues aspartate 77, aspartate 119, asparagine 157, histidine 249, histidine 303, and histidine 305 each contribute to the a divalent metal cation site. Residues 356 to 376 (VVLVIYCGAVGFLVVLTLSHL) form a helical membrane-spanning segment. Residues 392–396 (KRKTR) carry the Di-lysine motif motif.

Belongs to the metallophosphoesterase superfamily. MPPE1 family. Interacts with GPI-anchor proteins (via the GPI portion). Interacts with TMED10. The cofactor is Mn(2+).

The protein localises to the endoplasmic reticulum-Golgi intermediate compartment membrane. Functionally, metallophosphoesterase that catalyzes the removal of a side-chain ethanolamine-phosphate (EtNP) from the second mannose of the GPI-anchor protein intermediate. Participates in the glycan remodeling steps of GPI-anchor maturation to allow an efficient transport of GPI-anchor proteins from the endoplasmic reticulum to the Golgi. The chain is Metallophosphoesterase 1 from Macaca fascicularis (Crab-eating macaque).